A 145-amino-acid polypeptide reads, in one-letter code: 3-hydroxyacyl-[acyl-carrier-protein] dehydratase FabZ (145 aa).

His47 is a catalytic residue.

The protein belongs to the thioester dehydratase family. FabZ subfamily.

It localises to the cytoplasm. It catalyses the reaction a (3R)-hydroxyacyl-[ACP] = a (2E)-enoyl-[ACP] + H2O. Its function is as follows. Involved in unsaturated fatty acids biosynthesis. Catalyzes the dehydration of short chain beta-hydroxyacyl-ACPs and long chain saturated and unsaturated beta-hydroxyacyl-ACPs. The polypeptide is 3-hydroxyacyl-[acyl-carrier-protein] dehydratase FabZ (Vesicomyosocius okutanii subsp. Calyptogena okutanii (strain HA)).